Here is a 324-residue protein sequence, read N- to C-terminus: Dioxygenase tasH (324 aa).

The N-terminal stretch at 1 to 25 (MRSMSLWMLIGPVTGIATWASLRYA) is a signal peptide. Zn(2+)-binding residues include histidine 50, histidine 96, and histidine 284.

The protein belongs to the DODA-type extradiol aromatic ring-opening dioxygenase family. Monomer. The cofactor is Zn(2+).

Functionally, dioxygenase; part of the gene cluster that mediates the biosynthesis of the tetramic acids Sch210971 and Sch210972, potential anti-HIV fungal natural product that contain a decalin core. The PKS module of tasS together with the enoylreductase tasC catalyze the formation of the polyketide unit which is then conjugated to 4-hydroxyl-4-methyl glutamate (HMG) by the condensation domain of the tasS NRPS module. One unique structural feature of Sch210971 and Sch210972 is the tetramic acid motif proposed to be derived from the non-proteinogenic amino acid HMG, by a Dieckmann-type condensation catalyzed by the reductase domain of tasS. The aldolase tasA catalyzes the aldol condensation of 2 molecules of pyruvic acid to yield the intermediate 4-hydroxyl-4-methyl-2-oxoglutarate (HMOG), which can then be stereoselectively transaminated, may be by tasG, to form HMG. The Diels-Alderase tas3 then uses the Dieckmann product of tasS as substrate and catalyzes the Diels-Alder cycloaddition to form the decalin ring of Sch210971 and Sch210972. The chain is Dioxygenase tasH from Hapsidospora irregularis.